The primary structure comprises 229 residues: Potassium/proton antiporter CemA (229 aa).

4 consecutive transmembrane segments (helical) span residues 7-27, 114-134, 145-165, and 189-209; these read FTSLLYLASIVFLPWWISLSF, IICFVILSGYSILGNEELVIL, LSDTIKAFWILLLTDFFIGFH, and ILSSLVCIFPVILDTLFKFWV.

It belongs to the CemA family.

It localises to the plastid. The protein localises to the chloroplast inner membrane. It carries out the reaction K(+)(in) + H(+)(out) = K(+)(out) + H(+)(in). Functionally, contributes to K(+)/H(+) antiport activity by supporting proton efflux to control proton extrusion and homeostasis in chloroplasts in a light-dependent manner to modulate photosynthesis. Prevents excessive induction of non-photochemical quenching (NPQ) under continuous-light conditions. Indirectly promotes efficient inorganic carbon uptake into chloroplasts. The protein is Potassium/proton antiporter CemA of Daucus carota (Wild carrot).